The chain runs to 535 residues: T-complex protein 1 subunit zeta (535 aa).

Belongs to the TCP-1 chaperonin family. As to quaternary structure, heterooligomeric complex of about 850 to 900 kDa that forms two stacked rings, 12 to 16 nm in diameter.

The protein localises to the cytoplasm. Its function is as follows. Molecular chaperone; assists the folding of proteins upon ATP hydrolysis. Known to play a role, in vitro, in the folding of actin and tubulin. In Schizosaccharomyces pombe (strain 972 / ATCC 24843) (Fission yeast), this protein is T-complex protein 1 subunit zeta (cct6).